A 957-amino-acid chain; its full sequence is Protein CRT10 (957 aa).

The interval 695–719 (NSTEEDDVNSDPENEESGSSLTSFQ) is disordered. Residues 697 to 710 (TEEDDVNSDPENEE) show a composition bias toward acidic residues. Position 704 is a phosphoserine (S704).

As to quaternary structure, component of a cullin-RING ligase (CRL) composed of 4 subunits: the RING protein HRT1, the cullin RTT101, a linker protein MMS1, and the substrate receptor CRT10. Interacts with MMS1.

Its function is as follows. Substrate targeting component of a cullin-RING-based E3 ubiquitin-protein ligase complex RTT101(MMS1-CRT10). RTT101(MMS1-CRT10) may regulate nucleotide synthesis through transcriptional regulation of RNR genes encoding ribonucleotide reductases. The chain is Protein CRT10 (CRT10) from Saccharomyces cerevisiae (strain ATCC 204508 / S288c) (Baker's yeast).